The primary structure comprises 224 residues: N-terminal Xaa-Pro-Lys N-methyltransferase 1-A (224 aa).

Residues glycine 70, arginine 75, aspartate 92–threonine 94, leucine 120–glutamine 121, and glutamine 136 each bind S-adenosyl-L-methionine.

It belongs to the methyltransferase superfamily. NTM1 family.

The protein localises to the nucleus. The enzyme catalyses N-terminal L-alanyl-L-prolyl-L-lysyl-[protein] + 3 S-adenosyl-L-methionine = N-terminal N,N,N-trimethyl-L-alanyl-L-prolyl-L-lysyl-[protein] + 3 S-adenosyl-L-homocysteine + 3 H(+). It carries out the reaction N-terminal L-seryl-L-prolyl-L-lysyl-[protein] + 3 S-adenosyl-L-methionine = N-terminal N,N,N-trimethyl-L-seryl-L-prolyl-L-lysyl-[protein] + 3 S-adenosyl-L-homocysteine + 3 H(+). It catalyses the reaction N-terminal L-prolyl-L-prolyl-L-lysyl-[protein] + 2 S-adenosyl-L-methionine = N-terminal N,N-dimethyl-L-prolyl-L-prolyl-L-lysyl-[protein] + 2 S-adenosyl-L-homocysteine + 2 H(+). In terms of biological role, distributive alpha-N-methyltransferase that methylates the N-terminus of target proteins containing the N-terminal motif [Ala/Gly/Pro/Ser]-Pro-Lys when the initiator Met is cleaved. Specifically catalyzes mono-, di- or tri-methylation of the exposed alpha-amino group of the Ala, Gly or Ser residue in the [Ala/Gly/Ser]-Pro-Lys motif and mono- or di-methylation of Pro in the Pro-Pro-Lys motif. Required during mitosis for normal bipolar spindle formation and chromosome segregation via its action on target proteins. In Xenopus laevis (African clawed frog), this protein is N-terminal Xaa-Pro-Lys N-methyltransferase 1-A (ntmt1-a).